The primary structure comprises 1165 residues: DNA-directed RNA polymerase subunit beta' (1165 aa).

4 residues coordinate Zn(2+): C60, C62, C75, and C78. Positions 449, 451, and 453 each coordinate Mg(2+). Positions 794, 868, 875, and 878 each coordinate Zn(2+).

This sequence belongs to the RNA polymerase beta' chain family. As to quaternary structure, the RNAP catalytic core consists of 2 alpha, 1 beta, 1 beta' and 1 omega subunit. When a sigma factor is associated with the core the holoenzyme is formed, which can initiate transcription. Mg(2+) serves as cofactor. Requires Zn(2+) as cofactor.

It catalyses the reaction RNA(n) + a ribonucleoside 5'-triphosphate = RNA(n+1) + diphosphate. Functionally, DNA-dependent RNA polymerase catalyzes the transcription of DNA into RNA using the four ribonucleoside triphosphates as substrates. This Acetivibrio thermocellus (strain ATCC 27405 / DSM 1237 / JCM 9322 / NBRC 103400 / NCIMB 10682 / NRRL B-4536 / VPI 7372) (Clostridium thermocellum) protein is DNA-directed RNA polymerase subunit beta'.